The following is a 339-amino-acid chain: UDP-N-acetylglucosamine--N-acetylmuramyl-(pentapeptide) pyrophosphoryl-undecaprenol N-acetylglucosamine transferase (339 aa).

UDP-N-acetyl-alpha-D-glucosamine-binding positions include 9 to 11, asparagine 119, arginine 160, serine 188, and glutamine 280; that span reads TGG.

It belongs to the glycosyltransferase 28 family. MurG subfamily.

It is found in the cell inner membrane. The enzyme catalyses di-trans,octa-cis-undecaprenyl diphospho-N-acetyl-alpha-D-muramoyl-L-alanyl-D-glutamyl-meso-2,6-diaminopimeloyl-D-alanyl-D-alanine + UDP-N-acetyl-alpha-D-glucosamine = di-trans,octa-cis-undecaprenyl diphospho-[N-acetyl-alpha-D-glucosaminyl-(1-&gt;4)]-N-acetyl-alpha-D-muramoyl-L-alanyl-D-glutamyl-meso-2,6-diaminopimeloyl-D-alanyl-D-alanine + UDP + H(+). Its pathway is cell wall biogenesis; peptidoglycan biosynthesis. Functionally, cell wall formation. Catalyzes the transfer of a GlcNAc subunit on undecaprenyl-pyrophosphoryl-MurNAc-pentapeptide (lipid intermediate I) to form undecaprenyl-pyrophosphoryl-MurNAc-(pentapeptide)GlcNAc (lipid intermediate II). This is UDP-N-acetylglucosamine--N-acetylmuramyl-(pentapeptide) pyrophosphoryl-undecaprenol N-acetylglucosamine transferase from Thermus thermophilus (strain ATCC BAA-163 / DSM 7039 / HB27).